We begin with the raw amino-acid sequence, 454 residues long: Cerebellar degeneration-related protein 2 (454 aa).

2 coiled-coil regions span residues 44-142 (ELED…SGQG) and 192-265 (EEEN…QSEH). The disordered stretch occupies residues 134 to 153 (EELKSSGQGRRSPGKCDQEK). S311 is subject to Phosphoserine. Positions 346–380 (LHEVDTQYSALKVKYEELLKKCQEEQDSLSHKAVQ) form a coiled coil.

The protein belongs to the CDR2 family.

This is Cerebellar degeneration-related protein 2 (CDR2) from Homo sapiens (Human).